The chain runs to 53 residues: ATP synthase protein 8 (53 aa).

The helical transmembrane segment at 4–24 threads the bilayer; sequence MAPISWLLLFIIFSITFILFC.

Belongs to the ATPase protein 8 family. F-type ATPases have 2 components, CF(1) - the catalytic core - and CF(0) - the membrane proton channel.

It is found in the mitochondrion membrane. Its function is as follows. Mitochondrial membrane ATP synthase (F(1)F(0) ATP synthase or Complex V) produces ATP from ADP in the presence of a proton gradient across the membrane which is generated by electron transport complexes of the respiratory chain. F-type ATPases consist of two structural domains, F(1) - containing the extramembraneous catalytic core and F(0) - containing the membrane proton channel, linked together by a central stalk and a peripheral stalk. During catalysis, ATP synthesis in the catalytic domain of F(1) is coupled via a rotary mechanism of the central stalk subunits to proton translocation. Part of the complex F(0) domain. Minor subunit located with subunit a in the membrane. This chain is ATP synthase protein 8 (mt:ATPase8), found in Drosophila mauritiana (Fruit fly).